Consider the following 93-residue polypeptide: uncharacterized protein (93 aa).

This sequence belongs to the BolA/IbaG family.

This is an uncharacterized protein from Sinorhizobium sp.